The chain runs to 178 residues: MHLFTQTLVRFSSLIADGGVSFNPDIFETNVVNLAILTGGIFYLGSNALSESLVERQQKILGAIQEAEERLEQATERLKESKTQLEQAQLVIASIKEDAETTAKQVKSAILTEGKNEIERLTSAAKSQIVTIEAQVRKQISDYVVSLALQRVTLQLEGKLSDAAQQQILDRNISKLKD.

The chain crosses the membrane as a helical span at residues 34–50; the sequence is LAILTGGIFYLGSNALS.

Belongs to the ATPase B chain family. In terms of assembly, F-type ATPases have 2 components, F(1) - the catalytic core - and F(0) - the membrane proton channel. F(1) has five subunits: alpha(3), beta(3), gamma(1), delta(1), epsilon(1). F(0) has four main subunits: a(1), b(1), b'(1) and c(10-14). The alpha and beta chains form an alternating ring which encloses part of the gamma chain. F(1) is attached to F(0) by a central stalk formed by the gamma and epsilon chains, while a peripheral stalk is formed by the delta, b and b' chains.

The protein resides in the plastid. It is found in the chloroplast thylakoid membrane. Functionally, f(1)F(0) ATP synthase produces ATP from ADP in the presence of a proton or sodium gradient. F-type ATPases consist of two structural domains, F(1) containing the extramembraneous catalytic core and F(0) containing the membrane proton channel, linked together by a central stalk and a peripheral stalk. During catalysis, ATP synthesis in the catalytic domain of F(1) is coupled via a rotary mechanism of the central stalk subunits to proton translocation. Its function is as follows. Component of the F(0) channel, it forms part of the peripheral stalk, linking F(1) to F(0). This Ochrosphaera neapolitana protein is ATP synthase subunit b, chloroplastic.